Consider the following 568-residue polypeptide: Sphingosine-1-phosphate lyase 1 (568 aa).

Topologically, residues 1 to 40 are lumenal; that stretch reads MPSTDLLMLKAFEPYLEILEVYSTKAKNYVNGHCTKYEPW. Residues 41–61 form a helical; Signal-anchor for type III membrane protein membrane-spanning segment; that stretch reads QLIAWSVVWTLLIVWGYEFVF. Residues 62-568 lie on the Cytoplasmic side of the membrane; the sequence is QPESLWSRFK…SQMNGSPKPH (507 aa). Residue K353 is modified to N6-(pyridoxal phosphate)lysine; alternate. The residue at position 353 (K353) is an N6-acetyllysine; alternate. 3'-nitrotyrosine is present on residues Y356 and Y366. A Phosphoserine modification is found at S564.

Belongs to the group II decarboxylase family. Sphingosine-1-phosphate lyase subfamily. Homodimer. Pyridoxal 5'-phosphate serves as cofactor. As to expression, ubiquitously expressed. Expressed in fetal and adult adrenal gland (at protein level).

The protein resides in the endoplasmic reticulum membrane. The enzyme catalyses sphinganine 1-phosphate = hexadecanal + phosphoethanolamine. It catalyses the reaction sphing-4-enine 1-phosphate = (2E)-hexadecenal + phosphoethanolamine. The protein operates within lipid metabolism; sphingolipid metabolism. In terms of biological role, cleaves phosphorylated sphingoid bases (PSBs), such as sphingosine-1-phosphate, into fatty aldehydes and phosphoethanolamine. Elevates stress-induced ceramide production and apoptosis. Required for global lipid homeostasis in liver and cholesterol homeostasis in fibroblasts. Involved in the regulation of pro-inflammatory response and neutrophil trafficking. Modulates neuronal autophagy via phosphoethanolamine production which regulates accumulation of aggregate-prone proteins such as APP. Seems to play a role in establishing neuronal contact sites and axonal maintenance. The protein is Sphingosine-1-phosphate lyase 1 of Homo sapiens (Human).